A 278-amino-acid polypeptide reads, in one-letter code: Putative protein-disulfide oxidoreductase RF_0032 (278 aa).

Residues methionine 1–serine 18 form the signal peptide. The segment at valine 62 to proline 84 is disordered. The segment covering asparagine 65 to glutamine 81 has biased composition (polar residues). The region spanning proline 77–glutamate 266 is the Thioredoxin domain. Cysteine 119 and cysteine 122 form a disulfide bridge.

It belongs to the thioredoxin family. DsbA subfamily.

It localises to the periplasm. Functionally, may be required for disulfide bond formation in some proteins. This Rickettsia felis (strain ATCC VR-1525 / URRWXCal2) (Rickettsia azadi) protein is Putative protein-disulfide oxidoreductase RF_0032.